We begin with the raw amino-acid sequence, 304 residues long: Probable intron-encoded endonuclease 1 (304 aa).

One can recognise a GIY-YIG domain in the interval 84 to 175 (DKGGIYSFIN…RFNFDNLYNF (92 aa)).

To endonucleases of group I introns of fungi and phage.

It localises to the mitochondrion. Functionally, mitochondrial DNA endonuclease involved in intron homing. The sequence is that of Probable intron-encoded endonuclease 1 from Neurospora crassa (strain ATCC 24698 / 74-OR23-1A / CBS 708.71 / DSM 1257 / FGSC 987).